A 426-amino-acid chain; its full sequence is Phosphomethylpyrimidine synthase (426 aa).

Residues Asn65, Met94, Tyr123, His162, 184 to 186 (SRG), 225 to 228 (DGMR), and Glu264 each bind substrate. His268 contacts Zn(2+). Residue Tyr291 coordinates substrate. His332 lines the Zn(2+) pocket. Cys408, Cys411, and Cys415 together coordinate [4Fe-4S] cluster.

Belongs to the ThiC family. [4Fe-4S] cluster serves as cofactor.

The enzyme catalyses 5-amino-1-(5-phospho-beta-D-ribosyl)imidazole + S-adenosyl-L-methionine = 4-amino-2-methyl-5-(phosphooxymethyl)pyrimidine + CO + 5'-deoxyadenosine + formate + L-methionine + 3 H(+). It participates in cofactor biosynthesis; thiamine diphosphate biosynthesis. Its function is as follows. Catalyzes the synthesis of the hydroxymethylpyrimidine phosphate (HMP-P) moiety of thiamine from aminoimidazole ribotide (AIR) in a radical S-adenosyl-L-methionine (SAM)-dependent reaction. This is Phosphomethylpyrimidine synthase from Methanocaldococcus jannaschii (strain ATCC 43067 / DSM 2661 / JAL-1 / JCM 10045 / NBRC 100440) (Methanococcus jannaschii).